Here is a 392-residue protein sequence, read N- to C-terminus: Putative glutamate--cysteine ligase 2 (392 aa).

Positions 1–21 (MMPVSGWRAVSSAPASSSAGR) are disordered. A compositionally biased stretch (low complexity) spans 9–19 (AVSSAPASSSA).

It belongs to the glutamate--cysteine ligase type 2 family. YbdK subfamily.

It carries out the reaction L-cysteine + L-glutamate + ATP = gamma-L-glutamyl-L-cysteine + ADP + phosphate + H(+). Functionally, ATP-dependent carboxylate-amine ligase which exhibits weak glutamate--cysteine ligase activity. The chain is Putative glutamate--cysteine ligase 2 from Mycobacterium ulcerans (strain Agy99).